Here is a 530-residue protein sequence, read N- to C-terminus: T-box transcription factor TBX21 (530 aa).

The interval 1-55 (MGIVEPGCGDMLTGTEPMPSDEGRGPGADQQHRFFYPEPGAQDPTDRRAGSSLGT) is disordered. Serine 52 bears the Phosphoserine mark. Threonine 55 is subject to Phosphothreonine. Phosphotyrosine occurs at positions 76 and 117. The segment at residues 140 to 325 (LSNHLLWSKF…NNPFAKGFRE (186 aa)) is a DNA-binding region (T-box). At tyrosine 219 the chain carries Phosphotyrosine; by ABL1. Serine 224 is modified (phosphoserine). Phosphotyrosine; by ABL1 is present on tyrosine 265. Threonine 302 bears the Phosphothreonine mark. The residue at position 304 (tyrosine 304) is a Phosphotyrosine; by ABL1. Lysine 313 is covalently cross-linked (Glycyl lysine isopeptide (Lys-Gly) (interchain with G-Cter in ubiquitin)). Residues 444–530 (AGWFRPMRTL…EGQFYNYFPN (87 aa)) are disordered. Residues 462 to 482 (SEEQGSSPSLWPEVTSLQPEP) show a composition bias toward polar residues. Residues 498–515 (SPYPSSGDSSSPAGAPSP) show a composition bias toward low complexity. Position 508 is a phosphoserine (serine 508). Tyrosine 525 is subject to Phosphotyrosine; by ITK.

Interacts with RUNX1 and RUNX3. Interacts with ITK. The phosphorylated form (at Tyr-525) interacts with GATA3. Interacts with ABL1. Interacts with RELA. The phosphorylated form (at Thr-302) interacts with NFATC2. Interacts with KDM6B. Interacts with SMARCA4 in a KDM6B-dependent manner. Interacts with CCTN1 and CDK9. Interacts with USP10. In terms of processing, phosphorylations at Ser-52, Tyr-76, Ser-224 and Ser-508 are regulated by mTORC1. Phosphorylation at Tyr-525 is essential for its interaction GATA3. Phosphorylation at Tyr-219, Tyr-265 and Tyr-304 enhances its transcriptional activator activity. Phosphorylation at Thr-302 is required for its interaction with NFATC2. Post-translationally, ubiquitinated at Lys-313, leading to its degradation by the proteasome. Ubiquitination is essential for controlling protein stability, binding to the T-box-binding element of the IFN-gamma promoter, and for interaction with NFATC2 through induction of phosphorylation at Thr-302. Deubiquitinated by USP10 leading to its stabilization. T-cell specific. Expressed in regulatory T (TReg) cells.

Its subcellular location is the nucleus. Its function is as follows. Lineage-defining transcription factor which initiates Th1 lineage development from naive Th precursor cells both by activating Th1 genetic programs and by repressing the opposing Th2 and Th17 genetic programs. Activates transcription of a set of genes important for Th1 cell function, including those encoding IFN-gamma and the chemokine receptor CXCR3. Activates IFNG and CXCR3 genes in part by recruiting chromatin remodeling complexes including KDM6B, a SMARCA4-containing SWI/SNF-complex, and an H3K4me2-methyltransferase complex to their promoters and all of these complexes serve to establish a more permissive chromatin state conducive with transcriptional activation. Can activate Th1 genes also via recruitment of Mediator complex and P-TEFb (composed of CDK9 and CCNT1/cyclin-T1) in the form of the super elongation complex (SEC) to super-enhancers and associated genes in activated Th1 cells. Inhibits the Th17 cell lineage commitment by blocking RUNX1-mediated transactivation of Th17 cell-specific transcriptinal regulator RORC. Inhibits the Th2 cell lineage commitment by suppressing the production of Th2 cytokines, such as IL-4, IL-5, and IL- 13, via repression of transcriptional regulators GATA3 and NFATC2. Protects Th1 cells from amplifying aberrant type-I IFN response in an IFN-gamma abundant microenvironment by acting as a repressor of type-I IFN transcription factors and type-I IFN- stimulated genes. Acts as a regulator of antiviral B-cell responses; controls chronic viral infection by promoting the antiviral antibody IgG2a isotype switching and via regulation of a broad antiviral gene expression program. The protein is T-box transcription factor TBX21 (Tbx21) of Mus musculus (Mouse).